The sequence spans 101 residues: NAD(P)H-quinone oxidoreductase subunit 4L, chloroplastic (101 aa).

3 helical membrane-spanning segments follow: residues 2–22, 32–52, and 61–81; these read MLEH…YGLI, MCLE…SDLF, and IFSI…LAIV.

It belongs to the complex I subunit 4L family. As to quaternary structure, NDH is composed of at least 16 different subunits, 5 of which are encoded in the nucleus.

The protein localises to the plastid. It is found in the chloroplast thylakoid membrane. It catalyses the reaction a plastoquinone + NADH + (n+1) H(+)(in) = a plastoquinol + NAD(+) + n H(+)(out). The catalysed reaction is a plastoquinone + NADPH + (n+1) H(+)(in) = a plastoquinol + NADP(+) + n H(+)(out). NDH shuttles electrons from NAD(P)H:plastoquinone, via FMN and iron-sulfur (Fe-S) centers, to quinones in the photosynthetic chain and possibly in a chloroplast respiratory chain. The immediate electron acceptor for the enzyme in this species is believed to be plastoquinone. Couples the redox reaction to proton translocation, and thus conserves the redox energy in a proton gradient. This Nandina domestica (Heavenly bamboo) protein is NAD(P)H-quinone oxidoreductase subunit 4L, chloroplastic.